We begin with the raw amino-acid sequence, 476 residues long: Growth/differentiation factor 10 (476 aa).

Positions 1 to 29 (MAPGLARISLRSQLLPLVPLLLLLRGAGC) are cleaved as a signal peptide. Residues 30 to 366 (GHRVPSWSSL…EKTMQKARRR (337 aa)) constitute a propeptide that is removed on maturation. N-linked (GlcNAc...) asparagine glycans are attached at residues N114, N152, and N277. 2 disordered regions span residues 268–305 (GDFEPGAAPNSSADPRVRRAAQVSKPLQDNELPGLDER) and 330–358 (PRTGRKDRKKKDQDTFTPSSSQVLDFDEK). 3 cysteine pairs are disulfide-bonded: C374-C441, C403-C473, and C407-C475. A glycan (N-linked (GlcNAc...) asparagine) is linked at N467.

The protein belongs to the TGF-beta family. As to quaternary structure, homodimer or heterodimer. Can form a non-covalent complex of the mature region and the pro-region. In terms of tissue distribution, costa, costicartilage, femur, calvaria, trachea, aorta and brain. Predominantly in the cerebellum.

It is found in the secreted. Its function is as follows. Growth factor involved in osteogenesis and adipogenesis. Plays an inhibitory role in the process of osteoblast differentiation via SMAD2/3 pathway. Plays an inhibitory role in the process of adipogenesis. The chain is Growth/differentiation factor 10 from Rattus norvegicus (Rat).